Here is a 293-residue protein sequence, read N- to C-terminus: Bifunctional protein FolD 1 (293 aa).

NADP(+) is bound by residues 174 to 176 (GRS) and threonine 240.

The protein belongs to the tetrahydrofolate dehydrogenase/cyclohydrolase family. As to quaternary structure, homodimer.

It carries out the reaction (6R)-5,10-methylene-5,6,7,8-tetrahydrofolate + NADP(+) = (6R)-5,10-methenyltetrahydrofolate + NADPH. It catalyses the reaction (6R)-5,10-methenyltetrahydrofolate + H2O = (6R)-10-formyltetrahydrofolate + H(+). It participates in one-carbon metabolism; tetrahydrofolate interconversion. Functionally, catalyzes the oxidation of 5,10-methylenetetrahydrofolate to 5,10-methenyltetrahydrofolate and then the hydrolysis of 5,10-methenyltetrahydrofolate to 10-formyltetrahydrofolate. This chain is Bifunctional protein FolD 1, found in Saccharopolyspora erythraea (strain ATCC 11635 / DSM 40517 / JCM 4748 / NBRC 13426 / NCIMB 8594 / NRRL 2338).